Consider the following 312-residue polypeptide: DNA-directed RNA polymerase subunit alpha (312 aa).

The tract at residues 1 to 229 (MLQYQIDRID…ELFQPLATVT (229 aa)) is alpha N-terminal domain (alpha-NTD). The tract at residues 240 to 312 (PSPEAQIPLE…ISIPQSRTSV (73 aa)) is alpha C-terminal domain (alpha-CTD).

Belongs to the RNA polymerase alpha chain family. In terms of assembly, in cyanobacteria the RNAP catalytic core is composed of 2 alpha, 1 beta, 1 beta', 1 gamma and 1 omega subunit. When a sigma factor is associated with the core the holoenzyme is formed, which can initiate transcription.

The catalysed reaction is RNA(n) + a ribonucleoside 5'-triphosphate = RNA(n+1) + diphosphate. Functionally, DNA-dependent RNA polymerase catalyzes the transcription of DNA into RNA using the four ribonucleoside triphosphates as substrates. The sequence is that of DNA-directed RNA polymerase subunit alpha from Prochlorococcus marinus (strain AS9601).